The primary structure comprises 205 residues: MTPPERLFLPRVRGTTLHLLLLGLLLVLLPGAQGLPGVGLTPSAAQTARQHPKMHLAHSTLKPAAHLIGDPSKQNSLLWRANTDRAFLQDGFSLSNNSLLVPTSGIYFVYSQVVFSGKAYSPKATSSPLYLAHEVQLFSSQYPFHVPLLSSQKMVYPGLQEPWLHSMYHGAAFQLTQGDQLSTHTDGIPHLVLSPSTVFFGAFAL.

A signal peptide spans 1–34; the sequence is MTPPERLFLPRVRGTTLHLLLLGLLLVLLPGAQG. T41 carries O-linked (GalNAc...) threonine glycosylation. The region spanning 63–205 is the THD domain; it reads PAAHLIGDPS…STVFFGAFAL (143 aa). The N-linked (GlcNAc...) asparagine glycan is linked to N96.

The protein belongs to the tumor necrosis factor family. In terms of assembly, homotrimer, and heterotrimer of either two LTB and one LTA subunits or (less prevalent) two LTA and one LTB subunits. Interacts with TNFRSF14.

The protein resides in the secreted. The protein localises to the membrane. Functionally, cytokine that in its homotrimeric form binds to TNFRSF1A/TNFR1, TNFRSF1B/TNFBR and TNFRSF14/HVEM. In its heterotrimeric form with LTB binds to TNFRSF3/LTBR. Lymphotoxin is produced by lymphocytes and is cytotoxic for a wide range of tumor cells in vitro and in vivo. The chain is Lymphotoxin-alpha (LTA) from Pan troglodytes (Chimpanzee).